The following is a 267-amino-acid chain: Hydroxyethylthiazole kinase (267 aa).

Position 48 (methionine 48) interacts with substrate. ATP-binding residues include arginine 124 and serine 170. A substrate-binding site is contributed by glycine 197.

The protein belongs to the Thz kinase family. Requires Mg(2+) as cofactor.

It catalyses the reaction 5-(2-hydroxyethyl)-4-methylthiazole + ATP = 4-methyl-5-(2-phosphooxyethyl)-thiazole + ADP + H(+). The protein operates within cofactor biosynthesis; thiamine diphosphate biosynthesis; 4-methyl-5-(2-phosphoethyl)-thiazole from 5-(2-hydroxyethyl)-4-methylthiazole: step 1/1. Functionally, catalyzes the phosphorylation of the hydroxyl group of 4-methyl-5-beta-hydroxyethylthiazole (THZ). This is Hydroxyethylthiazole kinase from Leptospira biflexa serovar Patoc (strain Patoc 1 / Ames).